Here is a 122-residue protein sequence, read N- to C-terminus: S-adenosylmethionine decarboxylase proenzyme (122 aa).

Catalysis depends on Ser-63, which acts as the Schiff-base intermediate with substrate; via pyruvic acid. The residue at position 63 (Ser-63) is a Pyruvic acid (Ser); by autocatalysis. The active-site Proton acceptor; for processing activity is the His-68. Cys-83 acts as the Proton donor; for catalytic activity in catalysis.

Belongs to the prokaryotic AdoMetDC family. Type 1 subfamily. As to quaternary structure, heterotetramer of two alpha and two beta chains arranged as a dimer of alpha/beta heterodimers. Requires pyruvate as cofactor. Post-translationally, is synthesized initially as an inactive proenzyme. Formation of the active enzyme involves a self-maturation process in which the active site pyruvoyl group is generated from an internal serine residue via an autocatalytic post-translational modification. Two non-identical subunits are generated from the proenzyme in this reaction, and the pyruvate is formed at the N-terminus of the alpha chain, which is derived from the carboxyl end of the proenzyme. The post-translation cleavage follows an unusual pathway, termed non-hydrolytic serinolysis, in which the side chain hydroxyl group of the serine supplies its oxygen atom to form the C-terminus of the beta chain, while the remainder of the serine residue undergoes an oxidative deamination to produce ammonia and the pyruvoyl group blocking the N-terminus of the alpha chain.

It catalyses the reaction S-adenosyl-L-methionine + H(+) = S-adenosyl 3-(methylsulfanyl)propylamine + CO2. The protein operates within amine and polyamine biosynthesis; S-adenosylmethioninamine biosynthesis; S-adenosylmethioninamine from S-adenosyl-L-methionine: step 1/1. Functionally, catalyzes the decarboxylation of S-adenosylmethionine to S-adenosylmethioninamine (dcAdoMet), the propylamine donor required for the synthesis of the polyamines spermine and spermidine from the diamine putrescine. In Methanococcus maripaludis (strain C5 / ATCC BAA-1333), this protein is S-adenosylmethionine decarboxylase proenzyme.